We begin with the raw amino-acid sequence, 600 residues long: Elongation factor 4 (600 aa).

The region spanning 5 to 187 (SHIRNFSIVA…ALVNRLPCPE (183 aa)) is the tr-type G domain. Residues 17 to 22 (DHGKST) and 134 to 137 (NKID) each bind GTP.

Belongs to the TRAFAC class translation factor GTPase superfamily. Classic translation factor GTPase family. LepA subfamily.

The protein localises to the cell inner membrane. The catalysed reaction is GTP + H2O = GDP + phosphate + H(+). In terms of biological role, required for accurate and efficient protein synthesis under certain stress conditions. May act as a fidelity factor of the translation reaction, by catalyzing a one-codon backward translocation of tRNAs on improperly translocated ribosomes. Back-translocation proceeds from a post-translocation (POST) complex to a pre-translocation (PRE) complex, thus giving elongation factor G a second chance to translocate the tRNAs correctly. Binds to ribosomes in a GTP-dependent manner. In Paramagnetospirillum magneticum (strain ATCC 700264 / AMB-1) (Magnetospirillum magneticum), this protein is Elongation factor 4.